Here is a 310-residue protein sequence, read N- to C-terminus: Upstream stimulatory factor 1 (310 aa).

A compositionally biased stretch (polar residues) spans 1–17 (MKGQQKTAETEEGTVQI). 2 disordered regions span residues 1–26 (MKGQ…ATGE) and 171–209 (QGGS…EVER). A compositionally biased stretch (basic and acidic residues) spans 190–209 (EAPRTTRDEKRRAQHNEVER). In terms of domain architecture, bHLH spans 199 to 254 (KRRAQHNEVERRRRDKINNWIVQLSKIIPDCSMESTKSGQSKGGILSKACDYIQEL). The tract at residues 271 to 292 (LQLDNDVLRQQVEDLKNKNLLL) is leucine-zipper. Lys306 participates in a covalent cross-link: Glycyl lysine isopeptide (Lys-Gly) (interchain with G-Cter in SUMO2).

As to quaternary structure, efficient DNA binding requires dimerization with another bHLH protein. Binds DNA as a homodimer or a heterodimer (USF1/USF2). Interacts with varicella-zoster virus IE62 protein.

The protein resides in the nucleus. Its function is as follows. Transcription factor that binds to a symmetrical DNA sequence (E-boxes) (5'-CACGTG-3') that is found in a variety of viral and cellular promoters. This is Upstream stimulatory factor 1 (USF1) from Homo sapiens (Human).